We begin with the raw amino-acid sequence, 462 residues long: Trigger factor (462 aa).

The 86-residue stretch at 163–248 (GDEVLFDFKG…LKEVRRVNSL (86 aa)) folds into the PPIase FKBP-type domain. The tract at residues 442–462 (SMQEKQTQEPAEEKVETKEEK) is disordered. The span at 452–462 (AEEKVETKEEK) shows a compositional bias: basic and acidic residues.

The protein belongs to the FKBP-type PPIase family. Tig subfamily.

It localises to the cytoplasm. It carries out the reaction [protein]-peptidylproline (omega=180) = [protein]-peptidylproline (omega=0). Its function is as follows. Involved in protein export. Acts as a chaperone by maintaining the newly synthesized protein in an open conformation. Functions as a peptidyl-prolyl cis-trans isomerase. In Mycoplasmopsis synoviae (strain 53) (Mycoplasma synoviae), this protein is Trigger factor.